A 118-amino-acid chain; its full sequence is Beta-2-microglobulin (118 aa).

A signal peptide spans 1–20 (MARVVALVLLGLLSLTGLEA). Residues 22–115 (PRVPKVQVYS…LKDPLIVKWD (94 aa)) form the Ig-like C1-type domain. A disulfide bridge links C45 with C99.

It belongs to the beta-2-microglobulin family. As to quaternary structure, heterodimer of an alpha chain and a beta chain. Beta-2-microglobulin is the beta-chain of major histocompatibility complex class I molecules.

The protein resides in the secreted. Its function is as follows. Component of the class I major histocompatibility complex (MHC). Involved in the presentation of peptide antigens to the immune system. The chain is Beta-2-microglobulin (B2M) from Equus caballus (Horse).